We begin with the raw amino-acid sequence, 171 residues long: Shikimate kinase (171 aa).

ATP is bound at residue 14–19 (GAGKST). Serine 18 provides a ligand contact to Mg(2+). Residues aspartate 36, arginine 60, and glycine 82 each contribute to the substrate site. Arginine 120 lines the ATP pocket. Residue arginine 139 participates in substrate binding. Residue glutamine 156 coordinates ATP.

This sequence belongs to the shikimate kinase family. As to quaternary structure, monomer. Requires Mg(2+) as cofactor.

Its subcellular location is the cytoplasm. It catalyses the reaction shikimate + ATP = 3-phosphoshikimate + ADP + H(+). The protein operates within metabolic intermediate biosynthesis; chorismate biosynthesis; chorismate from D-erythrose 4-phosphate and phosphoenolpyruvate: step 5/7. Its function is as follows. Catalyzes the specific phosphorylation of the 3-hydroxyl group of shikimic acid using ATP as a cosubstrate. The sequence is that of Shikimate kinase from Shewanella putrefaciens (strain CN-32 / ATCC BAA-453).